The primary structure comprises 437 residues: Serine carboxypeptidase-like 9 (437 aa).

The N-terminal stretch at 1–21 (MSLILKFMLLILLVSSHHVRS) is a signal peptide. The N-linked (GlcNAc...) asparagine glycan is linked to N101. S175 is an active-site residue. Cystine bridges form between C243/C257 and C281/C293. N-linked (GlcNAc...) asparagine glycans are attached at residues N307 and N346. The active site involves D362. An N-linked (GlcNAc...) asparagine glycan is attached at N378. Residue H415 is part of the active site.

This sequence belongs to the peptidase S10 family. In terms of tissue distribution, expressed in seedlings, leaves, flowers and siliques.

Its subcellular location is the secreted. It catalyses the reaction 2 1-O-(trans-sinapoyl)-beta-D-glucose = 1,2-di-O-sinapoyl beta-D-glucose + D-glucose. Catalyzes the formation of 1,2-bis-O-sinapoyl beta-D-glucoside and an unidentified compound 1. This Arabidopsis thaliana (Mouse-ear cress) protein is Serine carboxypeptidase-like 9 (SCPL9).